We begin with the raw amino-acid sequence, 79 residues long: Large ribosomal subunit protein bL28 (79 aa).

The protein belongs to the bacterial ribosomal protein bL28 family.

The sequence is that of Large ribosomal subunit protein bL28 from Porphyromonas gingivalis (strain ATCC 33277 / DSM 20709 / CIP 103683 / JCM 12257 / NCTC 11834 / 2561).